The primary structure comprises 743 residues: Inhibitor of nuclear factor kappa-B kinase subunit alpha (743 aa).

The Protein kinase domain occupies 15–300 (WDMKDRLGTG…IDCGRPRCFM (286 aa)). ATP is bound by residues 21–29 (LGTGGFGNV) and Lys-44. Asp-144 (proton acceptor) is an active-site residue. Residues 453-474 (LLRFNTNLTKMKNTMVSASQQL) form a leucine-zipper region. The NEMO-binding stretch occupies residues 736 to 741 (MDFSWL).

This sequence belongs to the protein kinase superfamily. Ser/Thr protein kinase family. I-kappa-B kinase subfamily.

Its subcellular location is the cytoplasm. The protein localises to the nucleus. The enzyme catalyses L-seryl-[I-kappa-B protein] + ATP = O-phospho-L-seryl-[I-kappa-B protein] + ADP + H(+). With respect to regulation, activated when phosphorylated and inactivated when dephosphorylated. Functionally, phosphorylates inhibitors of NF-kappa-B thus leading to the dissociation of the inhibitor/NF-kappa-B complex and ultimately the degradation of the inhibitor. Phosphorylates 'Ser-10' of histone H3 at NF-kappa-B-regulated promoters during inflammatory responses triggered by cytokines. In Xenopus laevis (African clawed frog), this protein is Inhibitor of nuclear factor kappa-B kinase subunit alpha (chuk).